The following is a 331-amino-acid chain: FMRFamide-related neuropeptides (331 aa).

The first 25 residues, 1-25 (MRCWSPCSLLVVIAIYCLSSHTSEA), serve as a signal peptide directing secretion. Positions 26–65 (FDLAQACVESQRLSLLPICDTIFAVQQEGAQQSADDGLRS) are excised as a propeptide. Residues F71 and F83 each carry the phenylalanine amide modification. A propeptide spanning residues 86–94 (NVPDLPFED) is cleaved from the precursor. F100 carries the post-translational modification Phenylalanine amide. Positions 103–168 (AAPQLDDLLK…YVDDVEDSDV (66 aa)) are excised as a propeptide. Positions 122-153 (QKSDDTSVRRKRSTDAAPQSNTDSAEQKNDSA) are disordered. A phenylalanine amide mark is found at F174 and F181. Positions 184–194 (NPSDVGSKLTE) are excised as a propeptide. F200 carries the phenylalanine amide modification. The propeptide occupies 203-205 (DPE). At F211 the chain carries Phenylalanine amide. The propeptide occupies 214-216 (SDD). A Phenylalanine amide modification is found at F222. The propeptide occupies 225–236 (NPGDAEDELEED). F242 is subject to Phenylalanine amide. The propeptide occupies 245 to 254 (GDEEDEEEAE). F260 carries the post-translational modification Phenylalanine amide. Residues 263–265 (DPE) constitute a propeptide that is removed on maturation. F271 is subject to Phenylalanine amide. The propeptide occupies 274–277 (NGEE). F283 carries the post-translational modification Phenylalanine amide. Positions 286–293 (NPEEPEAD) are excised as a propeptide. The residue at position 299 (F299) is a Phenylalanine amide. Residues 302–312 (GGEEDDVNTEE) constitute a propeptide that is removed on maturation. Phenylalanine amide is present on F318. A propeptide spanning residues 321–331 (SAEKCKGCLEG) is cleaved from the precursor.

It belongs to the FARP (FMRFamide related peptide) family. In terms of tissue distribution, present ubiquitously in the brain and regions of the central nervous system as well as in the periphery and throughout the dermal chromatophore layer (at protein level).

It is found in the secreted. In terms of biological role, excitatory neurotransmitters that directly modulate chromatophore function by activating chromatophore expansion at the chromatophore neuromuscular junction. The sequence is that of FMRFamide-related neuropeptides from Sepia officinalis (Common cuttlefish).